Here is a 1167-residue protein sequence, read N- to C-terminus: RNA-directed RNA polymerase (1167 aa).

Residues 553–735 form the RdRp catalytic domain; it reads LTYGILAEAT…KALASYTGLE (183 aa).

It belongs to the reoviridae RNA-directed RNA polymerase family. Interacts with VP3 (Potential). Interacts with VP2 (Potential). Interacts with NSP5; this interaction is probably necessary for the formation of functional virus factories.

The protein localises to the virion. It catalyses the reaction RNA(n) + a ribonucleoside 5'-triphosphate = RNA(n+1) + diphosphate. In terms of biological role, RNA-directed RNA polymerase that is involved in both transcription and genome replication. Together with VP3 capping enzyme, forms an enzyme complex positioned near the channels situated at each of the five-fold vertices of the core. Following infection, the outermost layer of the virus is lost, leaving a double-layered particle (DLP) made up of the core and VP6 shell. VP1 then catalyzes the transcription of fully conservative plus-strand genomic RNAs that are extruded through the DLP's channels into the cytoplasm where they function as mRNAs for translation of viral proteins. One copy of each of the viral (+)RNAs is also recruited during core assembly, together with newly synthesized polymerase complexes and VP2. The polymerase of these novo-formed particles catalyzes the synthesis of complementary minus-strands leading to dsDNA formation. To do so, the polymerase specifically recognizes conserved 3' sequence(s) in plus-strand RNA templates. Once dsRNA synthesis is complete, the polymerase switches to the transcriptional mode, thus providing secondary transcription. The chain is RNA-directed RNA polymerase from Rotavirus X (isolate RVX/Human/Bangladesh/NADRV-B219/2002/GXP[X]) (RV ADRV-N).